The chain runs to 343 residues: Cell invasion protein SipD (343 aa).

The disordered stretch occupies residues 1 to 26; that stretch reads MLNIQNYSASPHPGIVAERPQTPSAS. Positions 295 to 322 form a coiled coil; it reads KAQEENMKTTLQTLTQKYSNANSLYDNL.

Belongs to the invasin protein D family.

The protein localises to the secreted. Required for translocation of effector proteins via the type III secretion system SPI-1, which is essential for an efficient bacterial internalization. Probably acts by modulating the secretion of SipA, SipB, and SipC. This Salmonella typhimurium (strain LT2 / SGSC1412 / ATCC 700720) protein is Cell invasion protein SipD (sipD).